We begin with the raw amino-acid sequence, 236 residues long: tRNA (guanine-N(1)-)-methyltransferase (236 aa).

S-adenosyl-L-methionine is bound by residues glycine 113 and 133-138 (IGDYVL).

Belongs to the RNA methyltransferase TrmD family. Homodimer.

Its subcellular location is the cytoplasm. It catalyses the reaction guanosine(37) in tRNA + S-adenosyl-L-methionine = N(1)-methylguanosine(37) in tRNA + S-adenosyl-L-homocysteine + H(+). Functionally, specifically methylates guanosine-37 in various tRNAs. In Lachnospira eligens (strain ATCC 27750 / DSM 3376 / VPI C15-48 / C15-B4) (Eubacterium eligens), this protein is tRNA (guanine-N(1)-)-methyltransferase.